The chain runs to 422 residues: Tyrosine--tRNA ligase 1 (422 aa).

L-tyrosine is bound at residue Y36. The 'HIGH' region motif lies at 41 to 50 (PTAGSLHIGH). Y173 and Q177 together coordinate L-tyrosine. The 'KMSKS' region motif lies at 233 to 237 (KFGKT). K236 contributes to the ATP binding site. The S4 RNA-binding domain occupies 355–419 (SDVVTLLLET…GKKQFAMVKL (65 aa)).

The protein belongs to the class-I aminoacyl-tRNA synthetase family. TyrS type 1 subfamily. In terms of assembly, homodimer.

The protein localises to the cytoplasm. It catalyses the reaction tRNA(Tyr) + L-tyrosine + ATP = L-tyrosyl-tRNA(Tyr) + AMP + diphosphate + H(+). In terms of biological role, catalyzes the attachment of tyrosine to tRNA(Tyr) in a two-step reaction: tyrosine is first activated by ATP to form Tyr-AMP and then transferred to the acceptor end of tRNA(Tyr). This is Tyrosine--tRNA ligase 1 from Vibrio vulnificus (strain CMCP6).